Here is a 694-residue protein sequence, read N- to C-terminus: Voltage-gated chloride channel TMC4 (694 aa).

Residues 1 to 21 (MEAWGQSPACSSSRKARTGPS) are disordered. Residues 1 to 150 (MEAWGQSPAC…GTESYFSLLR (150 aa)) are Extracellular-facing. The chain crosses the membrane as a helical span at residues 151-171 (FLLFLNLVASVIEICMKLIPT). Residues 172–231 (WLEGAPPGPPGPNISSPCGSYIPHTHGLVAFPTQLFNLLSGEGYLEWSPLFYGFYPPRSN) lie on the Cytoplasmic side of the membrane. Residues 232-252 (LAITYLCSVFAISVIYLLCIL) traverse the membrane as a helical segment. Topologically, residues 253–330 (RRSVSGLKET…SQRAKVWSMR (78 aa)) are extracellular. A helical membrane pass occupies residues 331–351 (ALLNVLVLALLGAAFYGIYWA). Over 352–376 (TEYTLTLQETPLVRQTPLFKLLVDY) the chain is Cytoplasmic. Residues 377–397 (LPSIFISLFNFVLPPVFKFIA) form a helical membrane-spanning segment. Topologically, residues 398-407 (SLEGYTQSRQ) are extracellular. The chain crosses the membrane as a helical span at residues 408–428 (IVLILLRTVFLRLASLVFLLV). Topologically, residues 429–465 (SLWSQITCGGNMEAEGCKACGYNYKEIPCWETRLGQE) are cytoplasmic. The helical transmembrane segment at 466-486 (MYKLVLFDLLMGLLVTLLVQF) threads the bilayer. The Extracellular portion of the chain corresponds to 487–513 (PRKILCGLCPGALGRLSGTLEFQVPDE). A helical transmembrane segment spans residues 514-534 (VLGLIYAQTVVWVGSFFCPLL). A topological domain (cytoplasmic) is located at residue Pro535. The helical transmembrane segment at 536 to 556 (LINTAKFLILFCLKKITLFSI) threads the bilayer. Residues 557–574 (YSPASRTFRASTANFFFP) lie on the Extracellular side of the membrane. The helical transmembrane segment at 575–595 (LVLLVGLAISAVPVLYSIFLI) threads the bilayer. At 596–635 (PPSKLCGPFRGKLSIWAQIPEAIESLPQTAQNFLYFLGTQ) the chain is on the cytoplasmic side. A helical transmembrane segment spans residues 636–656 (AFTVPLLILSSILMMYTVALA). Residues 657–694 (NCYGRLISELKRQIETEVQNKVFLAQRAVALSSRNGTS) lie on the Extracellular side of the membrane. Asn691 is a glycosylation site (N-linked (GlcNAc...) asparagine).

This sequence belongs to the TMC family. In terms of tissue distribution, expressed in taste bud cells of the posterior tongue. Ubiquitously expressed.

It localises to the membrane. It carries out the reaction chloride(in) = chloride(out). In terms of biological role, voltage-gated chloride channel involved in high-concentration salt taste sensation. Depolarization induced by high NaCl concentration may trigger the activation of TMC4-mediated chloride influx into taste bud cells, helping the return to resting potential. Also allows permeation of organic anions including gluconate, but their current amplitudes at positive potentials are less than that of chloride. Involved in pH and temperature-dependent modulation of salty taste. The chain is Voltage-gated chloride channel TMC4 from Mus musculus (Mouse).